Here is an 823-residue protein sequence, read N- to C-terminus: Kinesin-like protein KIN-7N (823 aa).

The region spanning 3–325 (KICVAVRVRP…LQFASRAKRI (323 aa)) is the Kinesin motor domain. 83–90 (GQTSSGKT) provides a ligand contact to ATP. 3 coiled-coil regions span residues 341–414 (LKRQ…NLNN), 527–557 (RENH…FNEQ), and 696–786 (EKKL…MEEE).

The protein belongs to the TRAFAC class myosin-kinesin ATPase superfamily. Kinesin family. KIN-7 subfamily.

The sequence is that of Kinesin-like protein KIN-7N from Arabidopsis thaliana (Mouse-ear cress).